We begin with the raw amino-acid sequence, 556 residues long: CDP-diacylglycerol--glycerol-3-phosphate 3-phosphatidyltransferase, mitochondrial (556 aa).

The N-terminal 28 residues, 1 to 28 (MAVAAAAAAGPVFWRRLLGLLPGRPGLA), are a transit peptide targeting the mitochondrion. A Phosphoserine modification is found at serine 49. Residue 124-131 (ASLYLGTG) participates in ATP binding. 2 PLD phosphodiesterase domains span residues 215–241 (TIGLQHIKVYLFDNSVILSGANLSDSY) and 460–493 (RGWTFHAKGLWLYLAGSSLPCLTLIGSPNFGYRS). Catalysis depends on residues histidine 220, lysine 222, and aspartate 227.

The protein belongs to the CDP-alcohol phosphatidyltransferase class-II family.

It is found in the mitochondrion. The enzyme catalyses a CDP-1,2-diacyl-sn-glycerol + sn-glycerol 3-phosphate = a 1,2-diacyl-sn-glycero-3-phospho-(1'-sn-glycero-3'-phosphate) + CMP + H(+). It functions in the pathway phospholipid metabolism; phosphatidylglycerol biosynthesis; phosphatidylglycerol from CDP-diacylglycerol: step 1/2. Its activity is regulated as follows. Activated by calcium and magnesium and inhibited by other bivalent cations. Functions in the biosynthesis of the anionic phospholipids phosphatidylglycerol and cardiolipin. In Homo sapiens (Human), this protein is CDP-diacylglycerol--glycerol-3-phosphate 3-phosphatidyltransferase, mitochondrial (PGS1).